Reading from the N-terminus, the 347-residue chain is Phenylalanine--tRNA ligase alpha subunit (347 aa).

Glutamate 261 serves as a coordination point for Mg(2+).

The protein belongs to the class-II aminoacyl-tRNA synthetase family. Phe-tRNA synthetase alpha subunit type 1 subfamily. As to quaternary structure, tetramer of two alpha and two beta subunits. Mg(2+) serves as cofactor.

It is found in the cytoplasm. The enzyme catalyses tRNA(Phe) + L-phenylalanine + ATP = L-phenylalanyl-tRNA(Phe) + AMP + diphosphate + H(+). This is Phenylalanine--tRNA ligase alpha subunit from Streptococcus pyogenes serotype M3 (strain ATCC BAA-595 / MGAS315).